We begin with the raw amino-acid sequence, 1055 residues long: DIS3-like exonuclease 2 (1055 aa).

Disordered regions lie at residues Met1 to Glu109 and Ser229 to Gln249. The span at His17–Lys32 shows a compositional bias: basic residues. Residues Glu39 to Asp59 are compositionally biased toward basic and acidic residues. The segment covering Pro97–Pro108 has biased composition (low complexity). Asp488 and Asp497 together coordinate Mg(2+).

The protein belongs to the RNR ribonuclease family. DIS3L2 subfamily. Mg(2+) is required as a cofactor. Requires Mn(2+) as cofactor. In terms of tissue distribution, widely expressed.

The protein localises to the cytoplasm. Its subcellular location is the P-body. In terms of biological role, 3'-5'-exoribonuclease that specifically recognizes RNAs polyuridylated at their 3' end and mediates their degradation. Component of an exosome-independent RNA degradation pathway that mediates degradation of cytoplasmic mRNAs that have been deadenylated and subsequently uridylated at their 3'. The polypeptide is DIS3-like exonuclease 2 (SOV) (Arabidopsis thaliana (Mouse-ear cress)).